We begin with the raw amino-acid sequence, 224 residues long: 7-cyano-7-deazaguanine synthase (224 aa).

8-18 provides a ligand contact to ATP; that stretch reads VSGGADSATVL. Zn(2+) contacts are provided by Cys189, Cys199, Cys202, and Cys205.

It belongs to the QueC family. Zn(2+) is required as a cofactor.

It carries out the reaction 7-carboxy-7-deazaguanine + NH4(+) + ATP = 7-cyano-7-deazaguanine + ADP + phosphate + H2O + H(+). It functions in the pathway purine metabolism; 7-cyano-7-deazaguanine biosynthesis. Catalyzes the ATP-dependent conversion of 7-carboxy-7-deazaguanine (CDG) to 7-cyano-7-deazaguanine (preQ(0)). The chain is 7-cyano-7-deazaguanine synthase from Rickettsia felis (strain ATCC VR-1525 / URRWXCal2) (Rickettsia azadi).